A 551-amino-acid chain; its full sequence is Transcription factor 7-like 1-B (551 aa).

The span at 1-11 (MPQLNGGGGDE) shows a compositional bias: gly residues. 3 disordered regions span residues 1–76 (MPQL…DLES), 298–326 (QEPN…KPHI), and 392–525 (GWSA…PPSP). Basic and acidic residues predominate over residues 19–32 (ISFKDEGEQEDKIS). The span at 46 to 61 (SSLVSESENNSSSSDS) shows a compositional bias: low complexity. Positions 63-76 (QTERRPQPRADLES) are enriched in basic and acidic residues. The HMG box DNA-binding region spans 326-394 (IKKPLNAFML…LHSQLYPGWS (69 aa)). Positions 449 to 468 (SPATPSAALASPAAPAATHS) are enriched in low complexity. A compositionally biased stretch (polar residues) spans 469-478 (EQAQPLSLTT). Low complexity predominate over residues 493–505 (SSSSSSSSSSSGL).

This sequence belongs to the TCF/LEF family. In terms of assembly, interacts with ctnnb1.

It is found in the nucleus. Participates in the Wnt signaling pathway. Probably binds to DNA and acts as a repressor in the absence of ctnnb1, and possibly as an activator in its presence. Regulates anterior-posterior patterning in the neuroectoderm by repressing posterior neural fates. Also required for hindbrain morphogenesis. The sequence is that of Transcription factor 7-like 1-B (tcf7l1b) from Danio rerio (Zebrafish).